A 505-amino-acid polypeptide reads, in one-letter code: L-carnitine/gamma-butyrobetaine antiporter (505 aa).

Transmembrane regions (helical) follow at residues 10 to 30, 50 to 70, 92 to 112, 143 to 163, 195 to 215, 231 to 251, 263 to 283, 316 to 336, 347 to 367, 403 to 423, 446 to 466, and 475 to 495; these read IEPK…WLTV, IWGW…FWLV, IFMM…SIEI, GPLP…FFFV, FYLV…TPLV, LDAI…ACGL, SYLS…SFIM, WTVF…IFLA, LCFG…TVLG, FSTA…VTLI, LLVR…LLAL, and AIIA…LSFI.

This sequence belongs to the BCCT transporter (TC 2.A.15) family. CaiT subfamily. As to quaternary structure, homotrimer.

The protein localises to the cell inner membrane. It carries out the reaction 4-(trimethylamino)butanoate(in) + (R)-carnitine(out) = 4-(trimethylamino)butanoate(out) + (R)-carnitine(in). The protein operates within amine and polyamine metabolism; carnitine metabolism. In terms of biological role, catalyzes the exchange of L-carnitine for gamma-butyrobetaine. This is L-carnitine/gamma-butyrobetaine antiporter from Citrobacter koseri (strain ATCC BAA-895 / CDC 4225-83 / SGSC4696).